A 788-amino-acid polypeptide reads, in one-letter code: Pyridoxal-dependent decarboxylase domain-containing protein 1 (788 aa).

Residues 28–40 (EDSQRRTEEENGK) are compositionally biased toward basic and acidic residues. A disordered region spans residues 28-51 (EDSQRRTEEENGKKLISGDIPGPL). Position 414 is a phosphothreonine (T414). A Phosphoserine modification is found at S652. The disordered stretch occupies residues 684–788 (AGVTLPPTPS…SQVEGPESLR (105 aa)). Phosphothreonine is present on residues T687 and T691. Phosphoserine is present on residues S710, S718, and S722. The segment covering 725 to 734 (HIEDLEKVER) has biased composition (basic and acidic residues). The span at 738–750 (GPEQITLEASSTE) shows a compositional bias: polar residues. Phosphoserine is present on residues S748, S757, S779, and S786. Positions 772-788 (PHPEDDHSQVEGPESLR) are enriched in basic and acidic residues.

The protein belongs to the group II decarboxylase family. Pyridoxal 5'-phosphate serves as cofactor.

This Homo sapiens (Human) protein is Pyridoxal-dependent decarboxylase domain-containing protein 1 (PDXDC1).